Here is a 2593-residue protein sequence, read N- to C-terminus: Citrinin polyketide synthase (2593 aa).

Residues 70-224 form an N-terminal acylcarrier protein transacylase domain (SAT) region; the sequence is KLLENLNAWI…YVSVIVDQRR (155 aa). C139 functions as the Nucleophile; for transacylase activity in the catalytic mechanism. The active-site Proton donor/acceptor; for transacylase activity is the H258. The Ketosynthase family 3 (KS3) domain occupies 391-806; that stretch reads DERIAVIGMA…GSNASMVVTQ (416 aa). Active-site for beta-ketoacyl synthase activity residues include C555, H690, and H729. A malonyl-CoA:ACP transacylase (MAT) domain region spans residues 906–1191; it reads PDPKPVILCF…VAIWLEAGSN (286 aa). Positions 1291–1424 are N-terminal hotdog fold; it reads PKGLTTFVGY…GTITFQAADS (134 aa). One can recognise a PKS/mFAS DH domain in the interval 1291–1603; that stretch reads PKGLTTFVGY…YQKVSISGIR (313 aa). The product template (PT) domain stretch occupies residues 1322–1601; it reads LLSGHIMANA…ISYQKVSISG (280 aa). H1326 acts as the Proton acceptor; for dehydratase activity in catalysis. A C-terminal hotdog fold region spans residues 1451–1603; it reads VADDILQGRN…YQKVSISGIR (153 aa). D1508 serves as the catalytic Proton donor; for dehydratase activity. A disordered region spans residues 1636 to 1662; the sequence is VADSPLVDGSSTAVSGTPPTKKAPKAP. Residues 1661 to 1738 enclose the Carrier domain; the sequence is APSVDITGKM…SLVECMQRIL (78 aa). S1689 is subject to O-(pantetheine 4'-phosphoryl)serine. Residues Y1955, H2067, and E2093 each act as for methyltransferase activity in the active site. Positions 1960 to 2134 are methyltransferase (CMeT) domain; sequence INAVWIQQAE…ATHWKKILTS (175 aa). The tract at residues 2215 to 2459 is NADPH-binding (R) domain; it reads PAPTGHCVLV…KALPDFDGSL (245 aa).

It depends on pantetheine 4'-phosphate as a cofactor.

It participates in mycotoxin biosynthesis. Non-reducing polyketide synthase; part of the gene cluster that mediates the biosynthesis of the mycotoxin citrinin, a hepato-nephrotoxic compound to humans due to inhibition of respiration complex III. The pathway begins with the synthesis of a keto-aldehyde intermediate by the citrinin PKS (pksCT) from successive condensations of 4 malonyl-CoA units, presumably with a simple acetyl-CoA starter unit. Release of the keto-aldehyde intermediate is consistent with the presence of the C-terminal reductive release domain. Mp11 collaborates with pksCT by catalyzing the hydrolysis of ACP-bound acyl intermediates to free the ACP from stalled intermediates. Mpl2 then catalyzes the oxidation of the C-12 methyl of the ketone intermediate to an alcohol intermediate which is further oxidized by the oxidoreductase mpl7 to produce a bisaldehyde intermediate. The fourth catalytic step is catalyzed by the mpl4 aldehyde dehydrogenase. The final transformation is the reduction of C-3 by mpl6 to provide the chemically stable citrinin nucleus. This Monascus purpureus (Red mold) protein is Citrinin polyketide synthase.